The following is a 916-amino-acid chain: MEMPLPPDDQELRNVIDKLAQFVARNGPEFEKMTMEKQKDNPKFSFLFGGEFYSYYKCKLALEQQQLICKQQTPELEPAATMPPLPQPPLAPAAPIPPAQGAPSMDELIQQSQWNLQQQEQHLLALRQEQVTAAVAHAVEQQMQKLLEETQLDMNEFDNLLQPIIDTCTKDAISAGKNWMFSNAKSPPHCELMAGHLRNRITADGAHFELRLHLIYLINDVLHHCQRKQARELLAALQKVVVPIYCTSFLAVEEDKQQKIARLLQLWEKNGYFDDSIIQQLQSPALGLGQYQATLINEYSSVVQPVQLAFQQQIQTLKTQHEEFVTSLAQQQQQQQQQQQQLQMPQMEAEVKATPPPPAPPPAPAPAPAIPPTTQPDDSKPPIQMPGSSEYEAPGGVQDPAAAGPRGPGPHDQIPPNKPPWFDQPHPVAPWGQQQPPEQPPYPHHQGGPPHCPPWNNSHEGMWGEQRGDPGWNGQRDAPWNNQPDAAWNSQFEGPWNSQHEQPPWGGGQREPPFRMQRPPHFRGPFPPHQQHPQFNQPPHPHNFNRFPPRFMQDDFPPRHPFERPPYPHRFDYPQGDFPAEMGPPHHHPGHRMPHPGINEHPPWAGPQHPDFGPPPHGFNGQPPHMRRQGPPHINHDDPSLVPNVPYFDLPAGLMAPLVKLEDHEYKPLDPKDIRLPPPMPPSERLLAAVEAFYSPPSHDRPRNSEGWEQNGLYEFFRAKMRARRRKGQEKRNSGPSRSRSRSKSRGRSSSRSNSRSSKSSGSYSRSRSRSCSRSYSRSRSRSRSRSRSSRSRSRSQSRSRSKSYSPGRRRRSRSRSPTPPSSAGLGSNSAPPIPDSRLGEENKGHQMLVKMGWSGSGGLGAKEQGIQDPIKGGDVRDKWDQYKGVGVALDDPYENYRRNKSYSFIARMKARDECK.

M1 is subject to N-acetylmethionine. The SURP motif repeat unit spans residues V15–K57. At K18 the chain carries N6-acetyllysine. Residues E149–G289 enclose the CID domain. Disordered stretches follow at residues Q336 to P549 and H601 to N635. Residues T354–T374 show a composition bias toward pro residues. Over residues W480–E501 the composition is skewed to polar residues. The span at P525–P541 shows a compositional bias: pro residues. Y714 carries the phosphotyrosine modification. The tract at residues R722 to D878 is disordered. Over residues S739–S749 the composition is skewed to basic residues. Positions S750–R766 are enriched in low complexity. The span at S767–S815 shows a compositional bias: basic residues. S813, S815, and S817 each carry phosphoserine. T819 is modified (phosphothreonine). Phosphoserine is present on S828. One can recognise a G-patch domain in the interval E841 to D891. Residue K844 forms a Glycyl lysine isopeptide (Lys-Gly) (interchain with G-Cter in SUMO2) linkage. 2 positions are modified to phosphoserine: S855 and S857. K872 is covalently cross-linked (Glycyl lysine isopeptide (Lys-Gly) (interchain with G-Cter in SUMO2)). Position 879 is an N6-acetyllysine (K879). A Phosphoserine modification is found at S904.

Expressed in brain, placenta, lung, liver, kidney, pancreas, cardiac and skeletal muscle, and in cultured HEL and Dami cells.

The protein localises to the cytoplasm. Its subcellular location is the perinuclear region. The protein resides in the endoplasmic reticulum. Involved in calcium homeostasis, growth and proliferation. This chain is Calcium homeostasis endoplasmic reticulum protein, found in Homo sapiens (Human).